A 657-amino-acid chain; its full sequence is Glycogen debranching enzyme (657 aa).

The Nucleophile role is filled by Asp336. Glu371 serves as the catalytic Proton donor. The segment covering Asn458 to Asp467 has biased composition (basic and acidic residues). Positions Asn458–Lys479 are disordered.

This sequence belongs to the glycosyl hydrolase 13 family.

It catalyses the reaction Hydrolysis of (1-&gt;6)-alpha-D-glucosidic linkages to branches with degrees of polymerization of three or four glucose residues in limit dextrin.. It participates in glycan degradation; glycogen degradation. Functionally, removes maltotriose and maltotetraose chains that are attached by 1,6-alpha-linkage to the limit dextrin main chain, generating a debranched limit dextrin. In Shigella sonnei (strain Ss046), this protein is Glycogen debranching enzyme.